The following is a 380-amino-acid chain: 4-hydroxy-3-methylbut-2-en-1-yl diphosphate synthase (flavodoxin) (380 aa).

[4Fe-4S] cluster is bound by residues Cys279, Cys282, Cys314, and Glu321.

The protein belongs to the IspG family. [4Fe-4S] cluster is required as a cofactor.

It catalyses the reaction (2E)-4-hydroxy-3-methylbut-2-enyl diphosphate + oxidized [flavodoxin] + H2O + 2 H(+) = 2-C-methyl-D-erythritol 2,4-cyclic diphosphate + reduced [flavodoxin]. The protein operates within isoprenoid biosynthesis; isopentenyl diphosphate biosynthesis via DXP pathway; isopentenyl diphosphate from 1-deoxy-D-xylulose 5-phosphate: step 5/6. Its function is as follows. Converts 2C-methyl-D-erythritol 2,4-cyclodiphosphate (ME-2,4cPP) into 1-hydroxy-2-methyl-2-(E)-butenyl 4-diphosphate. In Tropheryma whipplei (strain TW08/27) (Whipple's bacillus), this protein is 4-hydroxy-3-methylbut-2-en-1-yl diphosphate synthase (flavodoxin).